Here is a 234-residue protein sequence, read N- to C-terminus: tRNA (guanine-N(1)-)-methyltransferase (234 aa).

Residues Gly115 and 135–140 (VGDYIL) contribute to the S-adenosyl-L-methionine site.

It belongs to the RNA methyltransferase TrmD family. As to quaternary structure, homodimer.

It localises to the cytoplasm. It catalyses the reaction guanosine(37) in tRNA + S-adenosyl-L-methionine = N(1)-methylguanosine(37) in tRNA + S-adenosyl-L-homocysteine + H(+). Specifically methylates guanosine-37 in various tRNAs. In Rickettsia rickettsii (strain Iowa), this protein is tRNA (guanine-N(1)-)-methyltransferase.